A 289-amino-acid polypeptide reads, in one-letter code: ATP synthase gamma chain (289 aa).

It belongs to the ATPase gamma chain family. In terms of assembly, F-type ATPases have 2 components, CF(1) - the catalytic core - and CF(0) - the membrane proton channel. CF(1) has five subunits: alpha(3), beta(3), gamma(1), delta(1), epsilon(1). CF(0) has three main subunits: a, b and c.

It localises to the cell inner membrane. In terms of biological role, produces ATP from ADP in the presence of a proton gradient across the membrane. The gamma chain is believed to be important in regulating ATPase activity and the flow of protons through the CF(0) complex. This Histophilus somni (strain 129Pt) (Haemophilus somnus) protein is ATP synthase gamma chain.